A 1203-amino-acid chain; its full sequence is Nitric oxide synthase 3 (1203 aa).

The segment at 1–71 (MGNLKSVAQE…PPEGPKFPRV (71 aa)) is disordered. The N-myristoyl glycine moiety is linked to residue Gly-2. Residues Cys-15 and Cys-26 are each lipidated (S-palmitoyl cysteine). The segment covering 15-27 (CGLGLGLGLGLCG) has biased composition (gly residues). Position 33 is a phosphothreonine (Thr-33). Residues 33–66 (TPAPEPSRAPASLLPPAPEHSPPSSPLTQPPEGP) are compositionally biased toward pro residues. 2 residues coordinate Zn(2+): Cys-94 and Cys-99. The segment at 98 to 486 (RCLGSLVFPR…PDPWKGSAAK (389 aa)) is interaction with NOSIP. Ser-102 serves as a coordination point for (6R)-L-erythro-5,6,7,8-tetrahydrobiopterin. Ser-114 is subject to Phosphoserine; by CDK5. Residue Cys-184 coordinates heme b. 4 residues coordinate L-arginine: Gln-247, Trp-356, Tyr-357, and Glu-361. A (6R)-L-erythro-5,6,7,8-tetrahydrobiopterin-binding site is contributed by Arg-365. Asn-366 is an L-arginine binding site. 3 residues coordinate (6R)-L-erythro-5,6,7,8-tetrahydrobiopterin: Ala-446, Trp-447, and Phe-460. A heme b-binding site is contributed by Tyr-475. Residues 491-510 (TRKKTFKEVANAVKISASLM) form a calmodulin-binding region. The residue at position 495 (Thr-495) is a Phosphothreonine; by AMPK. The Flavodoxin-like domain maps to 520-703 (ATILYGSETG…AFRGWAQAAF (184 aa)). Residues Ser-526, Glu-527, Thr-528, Arg-530, Ser-572, and Thr-573 each contribute to the FMN site. Residues Ser-615, Ser-633, and Ser-638 each carry the phosphoserine modification. Ser-654, Cys-661, Glu-687, and Gln-691 together coordinate FMN. The region spanning 756–1002 (RKMFQATIRS…IRGAPSFRLP (247 aa)) is the FAD-binding FR-type domain. Arg-776 is a binding site for NADP(+). His-798 is a binding site for FAD. Ser-836 is subject to Phosphoserine. Positions 938, 940, 941, 956, 958, 962, 975, 976, and 977 each coordinate FAD. NADP(+)-binding residues include Thr-1016, Arg-1049, Ser-1078, Arg-1079, Lys-1085, Tyr-1087, and Gln-1089. Residue Thr-1175 is modified to Phosphothreonine. Residue Ser-1177 is modified to Phosphoserine; by AMPK. The residue at position 1179 (Ser-1179) is a Phosphoserine.

The protein belongs to the NOS family. Homodimer. Interacts with NOSIP and NOSTRIN. Interacts with HSP90AB1. Forms a complex with ASL, ASS1 and SLC7A1; the complex regulates cell-autonomous L-arginine synthesis and citrulline recycling while channeling extracellular L-arginine to nitric oxide synthesis pathway. Requires heme b as cofactor. FAD serves as cofactor. FMN is required as a cofactor. The cofactor is (6R)-L-erythro-5,6,7,8-tetrahydrobiopterin. Phosphorylation by AMPK at Ser-1177 in the presence of Ca(2+)-calmodulin (CaM) activates activity. In absence of Ca(2+)-calmodulin, AMPK also phosphorylates Thr-495, resulting in inhibition of activity. Phosphorylation of Ser-114 by CDK5 reduces activity. As to expression, platelets, placenta, liver and kidney.

It localises to the cell membrane. The protein localises to the membrane. It is found in the caveola. Its subcellular location is the cytoplasm. The protein resides in the cytoskeleton. It localises to the golgi apparatus. It carries out the reaction 2 L-arginine + 3 NADPH + 4 O2 + H(+) = 2 L-citrulline + 2 nitric oxide + 3 NADP(+) + 4 H2O. Its activity is regulated as follows. Stimulated by calcium/calmodulin. Inhibited by NOSIP and NOSTRIN. Its function is as follows. Produces nitric oxide (NO) which is implicated in vascular smooth muscle relaxation through a cGMP-mediated signal transduction pathway. NO mediates vascular endothelial growth factor (VEGF)-induced angiogenesis in coronary vessels and promotes blood clotting through the activation of platelets. Lacks eNOS activity, dominant-negative form that may down-regulate eNOS activity by forming heterodimers with isoform 1. The chain is Nitric oxide synthase 3 from Homo sapiens (Human).